The following is a 90-amino-acid chain: U7-theraphotoxin-Hhn1b (90 aa).

The N-terminal stretch at 1–19 (MKTAIFTVVLALAVFAVLS) is a signal peptide. Residues 20-50 (FGWEANEKALSEEFTELIHEKEAASETEARE) constitute a propeptide that is removed on maturation. 3 disulfide bridges follow: Cys-51/Cys-65, Cys-58/Cys-70, and Cys-64/Cys-81.

This sequence belongs to the neurotoxin 10 (Hwtx-1) family. 13 (Hntx-13) subfamily. In terms of tissue distribution, expressed by the venom gland.

The protein resides in the secreted. Ion channel inhibitor. The sequence is that of U7-theraphotoxin-Hhn1b from Cyriopagopus hainanus (Chinese bird spider).